The sequence spans 344 residues: UDP-3-O-acylglucosamine N-acyltransferase (344 aa).

His-248 functions as the Proton acceptor in the catalytic mechanism.

Belongs to the transferase hexapeptide repeat family. LpxD subfamily. As to quaternary structure, homotrimer.

The enzyme catalyses a UDP-3-O-[(3R)-3-hydroxyacyl]-alpha-D-glucosamine + a (3R)-hydroxyacyl-[ACP] = a UDP-2-N,3-O-bis[(3R)-3-hydroxyacyl]-alpha-D-glucosamine + holo-[ACP] + H(+). It participates in bacterial outer membrane biogenesis; LPS lipid A biosynthesis. In terms of biological role, catalyzes the N-acylation of UDP-3-O-acylglucosamine using 3-hydroxyacyl-ACP as the acyl donor. Is involved in the biosynthesis of lipid A, a phosphorylated glycolipid that anchors the lipopolysaccharide to the outer membrane of the cell. The chain is UDP-3-O-acylglucosamine N-acyltransferase from Synechocystis sp. (strain ATCC 27184 / PCC 6803 / Kazusa).